A 93-amino-acid chain; its full sequence is Putative defensin-like protein 283 (93 aa).

Residues 1–24 form the signal peptide; it reads MTKIGFYLATYATIYIILSPGLLA. Cystine bridges form between Cys-43–Cys-83, Cys-66–Cys-90, and Cys-72–Cys-92.

It belongs to the DEFL family.

It is found in the secreted. The protein is Putative defensin-like protein 283 of Arabidopsis thaliana (Mouse-ear cress).